A 428-amino-acid chain; its full sequence is MDLTISNELTGEIYGPIEVSEDMALTDLIALLQADCGFDKTKHDLYYNMDILDSNRTQSLKELGLKTDDLLLIRGKISNSIQTDAATLSDEAFIEQFRQELLNNQMLRSQLILQIPGLNDLVNDPLLFRERLGPLILQRRYGGYNTAMNPFGIPQDEYTRLMANPDDPDNKKRIAELLDQQAIDEQLRNAIEYTPEMFTQVPMLYINIEINNYPVKAFVDTGAQTTIMSTRLAKKTGLSRMIDKRFIGEARGVGTGKIIGRIHQAQVKIETQYIPCSFTVLDTDIDVLIGLDMLKRHLACVDLKENVLRIAEVETSFLSEAEIPKSFQEGLPAPTSVTTSSDKPLTPTKTSSTLPPQPGAVPALAPRTGMGPTPTGRSTAGATTATGRTFPEQTIKQLMDLGFPRDAVVKALKQTNGNAEFAASLLFQ.

Residues 1-80 (MDLTISNELT…LLIRGKISNS (80 aa)) enclose the Ubiquitin-like domain. K171 is covalently cross-linked (Glycyl lysine isopeptide (Lys-Gly) (interchain with G-Cter in ubiquitin)). D220 is an active-site residue. K257 participates in a covalent cross-link: Glycyl lysine isopeptide (Lys-Gly) (interchain with G-Cter in ubiquitin). Residues 328–388 (QEGLPAPTSV…TAGATTATGR (61 aa)) form a disordered region. 2 stretches are compositionally biased toward low complexity: residues 338–354 (TTSSDKPLTPTKTSSTL) and 371–388 (GPTPTGRSTAGATTATGR). The region spanning 389–428 (TFPEQTIKQLMDLGFPRDAVVKALKQTNGNAEFAASLLFQ) is the UBA domain.

This sequence belongs to the DDI1 family. Forms homodimers. Interacts with RAD23. These interactions are mediated by the UBA domain. Is also able to bind ubiquitin and polyubiquitinated proteins. Interacts with the SNAREs SNC1, SNC2, SSO1, TLG1 and TLG2. Binding to SSO1 is promoted by the phosphorylation of 'Ser-49' of SSO1 by TKP1.

The protein localises to the cytoplasm. The protein resides in the cell membrane. With respect to regulation, inhibited by the proteinase inhibitors indinavir, lopinavir, nelfinavir, isovaleryl pepstatin, ritonavir, saquinavir and tipranavir. Its function is as follows. Aspartic protease. Appears to act as negative regulator of constitutive exocytosis. May act at the level of secretory vesicle docking and fusion as a competitive inhibitor of SNARE assembly. Acts as a linker between the 19S proteasome and polyubiquitinated proteins like the HO endonuclease and UFO1 via UBA domain interactions with ubiquitin for their subsequent degradation. Required for S-phase checkpoint control. This chain is DNA damage-inducible protein 1 (DDI1), found in Saccharomyces cerevisiae (strain ATCC 204508 / S288c) (Baker's yeast).